A 350-amino-acid chain; its full sequence is Bifunctional methylenetetrahydrofolate dehydrogenase/cyclohydrolase, mitochondrial (350 aa).

The N-terminal 35 residues, 1–35 (MASVSLLSALAVRLLRPTHGCHPRLQPFHLAAVRN), are a transit peptide targeting the mitochondrion. N6-acetyllysine; alternate is present on Lys-50. A Glycyl lysine isopeptide (Lys-Gly) (interchain with G-Cter in SUMO2); alternate cross-link involves residue Lys-50. Residues 84–88 (YVLNK) and 131–133 (VQL) each bind substrate. NAD(+) contacts are provided by residues 200-202 (GRS) and Arg-233. 309–313 (PGGVG) is a substrate binding site.

Belongs to the tetrahydrofolate dehydrogenase/cyclohydrolase family. As to quaternary structure, homodimer. The cofactor is Mg(2+).

It is found in the mitochondrion. It catalyses the reaction (6R)-5,10-methylene-5,6,7,8-tetrahydrofolate + NAD(+) = (6R)-5,10-methenyltetrahydrofolate + NADH. It carries out the reaction (6R)-5,10-methenyltetrahydrofolate + H2O = (6R)-10-formyltetrahydrofolate + H(+). In terms of biological role, although its dehydrogenase activity is NAD-specific, it can also utilize NADP at a reduced efficiency. The chain is Bifunctional methylenetetrahydrofolate dehydrogenase/cyclohydrolase, mitochondrial (Mthfd2) from Mus musculus (Mouse).